Here is a 907-residue protein sequence, read N- to C-terminus: Alanine--tRNA ligase (907 aa).

Residues His581, His585, Cys683, and His687 each coordinate Zn(2+).

The protein belongs to the class-II aminoacyl-tRNA synthetase family. Requires Zn(2+) as cofactor.

The protein localises to the cytoplasm. It carries out the reaction tRNA(Ala) + L-alanine + ATP = L-alanyl-tRNA(Ala) + AMP + diphosphate. In terms of biological role, catalyzes the attachment of alanine to tRNA(Ala) in a two-step reaction: alanine is first activated by ATP to form Ala-AMP and then transferred to the acceptor end of tRNA(Ala). Also edits incorrectly charged Ser-tRNA(Ala) and Gly-tRNA(Ala) via its editing domain. The polypeptide is Alanine--tRNA ligase (Bdellovibrio bacteriovorus (strain ATCC 15356 / DSM 50701 / NCIMB 9529 / HD100)).